Here is a 470-residue protein sequence, read N- to C-terminus: Neuraminidase (470 aa).

At 1–14 the chain is on the intravirion side; it reads MNPNQKIITIGSIS. The involved in apical transport and lipid raft association stretch occupies residues 11–32; the sequence is GSISLGLVVFNVLLHVVSIIVT. The helical transmembrane segment at 15–35 threads the bilayer; that stretch reads LGLVVFNVLLHVVSIIVTVLI. The segment at 32–86 is hypervariable stalk region; the sequence is TVLILGKGENNGICNGTVVREYNETVRIERVTQWHNTNVVEYVPYWNGGTYMNNT. Residues 36-470 lie on the Virion surface side of the membrane; that stretch reads LGKGENNGIC…AILPFDIDKM (435 aa). N-linked (GlcNAc...) asparagine; by host glycans are attached at residues Asn-46, Asn-54, and Asn-84. The head of neuraminidase stretch occupies residues 89–470; the sequence is ICDVKGFAPF…AILPFDIDKM (382 aa). Cystine bridges form between Cys-90-Cys-417, Cys-122-Cys-127, Cys-182-Cys-229, Cys-231-Cys-236, Cys-277-Cys-290, Cys-279-Cys-288, Cys-316-Cys-335, and Cys-421-Cys-446. Arg-116 contributes to the substrate binding site. Residue Asn-144 is glycosylated (N-linked (GlcNAc...) asparagine; by host). Asp-149 (proton donor/acceptor) is an active-site residue. Arg-150 provides a ligand contact to substrate. Substrate is bound at residue 275-276; the sequence is EE. Arg-291 provides a ligand contact to substrate. Asp-292 serves as a coordination point for Ca(2+). The N-linked (GlcNAc...) asparagine; by host glycan is linked to Asn-293. Gly-296 and Asp-322 together coordinate Ca(2+). Substrate is bound at residue Arg-368. An N-linked (GlcNAc...) asparagine; by host glycan is attached at Asn-398. Tyr-402 serves as the catalytic Nucleophile.

The protein belongs to the glycosyl hydrolase 34 family. In terms of assembly, homotetramer. Ca(2+) is required as a cofactor. N-glycosylated.

Its subcellular location is the virion membrane. It is found in the host apical cell membrane. It carries out the reaction Hydrolysis of alpha-(2-&gt;3)-, alpha-(2-&gt;6)-, alpha-(2-&gt;8)- glycosidic linkages of terminal sialic acid residues in oligosaccharides, glycoproteins, glycolipids, colominic acid and synthetic substrates.. Inhibited by the neuraminidase inhibitors zanamivir (Relenza) and oseltamivir (Tamiflu). These drugs interfere with the release of progeny virus from infected cells and are effective against all influenza strains. Resistance to neuraminidase inhibitors is quite rare. Functionally, catalyzes the removal of terminal sialic acid residues from viral and cellular glycoconjugates. Cleaves off the terminal sialic acids on the glycosylated HA during virus budding to facilitate virus release. Additionally helps virus spread through the circulation by further removing sialic acids from the cell surface. These cleavages prevent self-aggregation and ensure the efficient spread of the progeny virus from cell to cell. Otherwise, infection would be limited to one round of replication. Described as a receptor-destroying enzyme because it cleaves a terminal sialic acid from the cellular receptors. May facilitate viral invasion of the upper airways by cleaving the sialic acid moieties on the mucin of the airway epithelial cells. Likely to plays a role in the budding process through its association with lipid rafts during intracellular transport. May additionally display a raft-association independent effect on budding. Plays a role in the determination of host range restriction on replication and virulence. Sialidase activity in late endosome/lysosome traffic seems to enhance virus replication. The sequence is that of Neuraminidase from Influenza A virus (strain A/Turkey/Ireland/1378/1983 H5N8).